The following is a 344-amino-acid chain: GTP 3',8-cyclase (344 aa).

The 226-residue stretch at 19–244 (PFGRTISYLR…MDLAESTGGP (226 aa)) folds into the Radical SAM core domain. A GTP-binding site is contributed by Arg28. Cys35 and Cys39 together coordinate [4Fe-4S] cluster. Position 41 (Tyr41) interacts with S-adenosyl-L-methionine. Cys42 lines the [4Fe-4S] cluster pocket. Arg77 is a binding site for GTP. An S-adenosyl-L-methionine-binding site is contributed by Gly81. Thr111 lines the GTP pocket. Ser135 contributes to the S-adenosyl-L-methionine binding site. Lys171 lines the GTP pocket. Position 205 (Met205) interacts with S-adenosyl-L-methionine. Residues Cys268 and Cys271 each contribute to the [4Fe-4S] cluster site. 273–275 (RVR) serves as a coordination point for GTP. Cys285 contributes to the [4Fe-4S] cluster binding site.

Belongs to the radical SAM superfamily. MoaA family. In terms of assembly, monomer and homodimer. Requires [4Fe-4S] cluster as cofactor.

It carries out the reaction GTP + AH2 + S-adenosyl-L-methionine = (8S)-3',8-cyclo-7,8-dihydroguanosine 5'-triphosphate + 5'-deoxyadenosine + L-methionine + A + H(+). The protein operates within cofactor biosynthesis; molybdopterin biosynthesis. Its function is as follows. Catalyzes the cyclization of GTP to (8S)-3',8-cyclo-7,8-dihydroguanosine 5'-triphosphate. In Bradyrhizobium diazoefficiens (strain JCM 10833 / BCRC 13528 / IAM 13628 / NBRC 14792 / USDA 110), this protein is GTP 3',8-cyclase.